The following is a 938-amino-acid chain: Protein translocase subunit SecA 1 (938 aa).

ATP contacts are provided by residues Gln-84, 102–106, and Asp-491; that span reads GEGKT. A disordered region spans residues 865–938; it reads QTGGVATKER…QKTGRHAKRR (74 aa). Positions 918–927 are enriched in basic and acidic residues; it reads TRKERREAAR.

It belongs to the SecA family. Monomer and homodimer. Part of the essential Sec protein translocation apparatus which comprises SecA, SecYEG and auxiliary proteins SecDF. Other proteins may also be involved.

The protein localises to the cell membrane. Its subcellular location is the cytoplasm. It carries out the reaction ATP + H2O + cellular proteinSide 1 = ADP + phosphate + cellular proteinSide 2.. Its function is as follows. Part of the Sec protein translocase complex. Interacts with the SecYEG preprotein conducting channel. Has a central role in coupling the hydrolysis of ATP to the transfer of proteins into and across the cell membrane, serving as an ATP-driven molecular motor driving the stepwise translocation of polypeptide chains across the membrane. The chain is Protein translocase subunit SecA 1 from Mycolicibacterium vanbaalenii (strain DSM 7251 / JCM 13017 / BCRC 16820 / KCTC 9966 / NRRL B-24157 / PYR-1) (Mycobacterium vanbaalenii).